Reading from the N-terminus, the 307-residue chain is tRNA pseudouridine synthase B (307 aa).

Catalysis depends on Asp-39, which acts as the Nucleophile.

It belongs to the pseudouridine synthase TruB family. Type 1 subfamily.

The enzyme catalyses uridine(55) in tRNA = pseudouridine(55) in tRNA. Its function is as follows. Responsible for synthesis of pseudouridine from uracil-55 in the psi GC loop of transfer RNAs. This is tRNA pseudouridine synthase B from Lactiplantibacillus plantarum (strain ATCC BAA-793 / NCIMB 8826 / WCFS1) (Lactobacillus plantarum).